Consider the following 282-residue polypeptide: Shikimate dehydrogenase (NADP(+)) (282 aa).

Shikimate contacts are provided by residues 15–17 (SKS) and threonine 62. Catalysis depends on lysine 66, which acts as the Proton acceptor. Residues asparagine 87 and aspartate 103 each coordinate shikimate. NADP(+) contacts are provided by residues 127-131 (GAGGA), 151-156 (NRTHTK), and methionine 220. Residue tyrosine 222 participates in shikimate binding. Residue glycine 244 coordinates NADP(+).

This sequence belongs to the shikimate dehydrogenase family. In terms of assembly, homodimer.

It catalyses the reaction shikimate + NADP(+) = 3-dehydroshikimate + NADPH + H(+). It functions in the pathway metabolic intermediate biosynthesis; chorismate biosynthesis; chorismate from D-erythrose 4-phosphate and phosphoenolpyruvate: step 4/7. Its function is as follows. Involved in the biosynthesis of the chorismate, which leads to the biosynthesis of aromatic amino acids. Catalyzes the reversible NADPH linked reduction of 3-dehydroshikimate (DHSA) to yield shikimate (SA). The chain is Shikimate dehydrogenase (NADP(+)) from Shewanella baltica (strain OS185).